Reading from the N-terminus, the 53-residue chain is Cytochrome c oxidase subunit 7e (53 aa).

As to quaternary structure, slime mold cytochrome c oxidase consists of at least seven different polypeptides species, subunits I, II, III, IV, V, VI, and VIIe/s in order of MW.

The protein resides in the mitochondrion inner membrane. It catalyses the reaction 4 Fe(II)-[cytochrome c] + O2 + 8 H(+)(in) = 4 Fe(III)-[cytochrome c] + 2 H2O + 4 H(+)(out). Its function is as follows. This protein is one of the nuclear-coded polypeptide chains of cytochrome c oxidase, the terminal oxidase in mitochondrial electron transport. In Dictyostelium discoideum (Social amoeba), this protein is Cytochrome c oxidase subunit 7e (cxgE).